A 269-amino-acid polypeptide reads, in one-letter code: Thiazole synthase (269 aa).

Lys-112 functions as the Schiff-base intermediate with DXP in the catalytic mechanism. 1-deoxy-D-xylulose 5-phosphate is bound by residues Gly-173, 199-200, and 221-222; these read AG and NT.

It belongs to the ThiG family. As to quaternary structure, homotetramer. Forms heterodimers with either ThiH or ThiS.

The protein resides in the cytoplasm. It carries out the reaction [ThiS sulfur-carrier protein]-C-terminal-Gly-aminoethanethioate + 2-iminoacetate + 1-deoxy-D-xylulose 5-phosphate = [ThiS sulfur-carrier protein]-C-terminal Gly-Gly + 2-[(2R,5Z)-2-carboxy-4-methylthiazol-5(2H)-ylidene]ethyl phosphate + 2 H2O + H(+). Its pathway is cofactor biosynthesis; thiamine diphosphate biosynthesis. In terms of biological role, catalyzes the rearrangement of 1-deoxy-D-xylulose 5-phosphate (DXP) to produce the thiazole phosphate moiety of thiamine. Sulfur is provided by the thiocarboxylate moiety of the carrier protein ThiS. In vitro, sulfur can be provided by H(2)S. This is Thiazole synthase from Caulobacter vibrioides (strain ATCC 19089 / CIP 103742 / CB 15) (Caulobacter crescentus).